Here is a 187-residue protein sequence, read N- to C-terminus: dITP/XTP pyrophosphatase (187 aa).

7-12 (TNNPYK) contacts substrate. Mg(2+) is bound by residues E36 and D65. The active-site Proton acceptor is the D65. Residues T66, 140–143 (FGYD), K163, and 168–169 (HR) each bind substrate.

Belongs to the HAM1 NTPase family. Homodimer. Mg(2+) is required as a cofactor.

The catalysed reaction is XTP + H2O = XMP + diphosphate + H(+). It catalyses the reaction dITP + H2O = dIMP + diphosphate + H(+). It carries out the reaction ITP + H2O = IMP + diphosphate + H(+). Its function is as follows. Pyrophosphatase that catalyzes the hydrolysis of nucleoside triphosphates to their monophosphate derivatives, with a high preference for the non-canonical purine nucleotides XTP (xanthosine triphosphate), dITP (deoxyinosine triphosphate) and ITP. Seems to function as a house-cleaning enzyme that removes non-canonical purine nucleotides from the nucleotide pool, thus preventing their incorporation into DNA/RNA and avoiding chromosomal lesions. This Pyrobaculum aerophilum (strain ATCC 51768 / DSM 7523 / JCM 9630 / CIP 104966 / NBRC 100827 / IM2) protein is dITP/XTP pyrophosphatase.